A 704-amino-acid chain; its full sequence is Glycine--tRNA ligase beta subunit (704 aa).

It belongs to the class-II aminoacyl-tRNA synthetase family. In terms of assembly, tetramer of two alpha and two beta subunits.

It localises to the cytoplasm. It carries out the reaction tRNA(Gly) + glycine + ATP = glycyl-tRNA(Gly) + AMP + diphosphate. The polypeptide is Glycine--tRNA ligase beta subunit (Rhizobium johnstonii (strain DSM 114642 / LMG 32736 / 3841) (Rhizobium leguminosarum bv. viciae)).